The following is a 467-amino-acid chain: Membrane-bound acylglycerophosphatidylinositol O-acyltransferase mboat7 (467 aa).

Over 1-5 the chain is Cytoplasmic; that stretch reads MSPDE. The chain crosses the membrane as a helical span at residues 6-22; sequence LVYLGILAATIPVGFLF. Topologically, residues 23-33 are lumenal; it reads RYLSPPVKQGA. A helical membrane pass occupies residues 34–57; that stretch reads ALLLGLIISIATCGIHTLHSLCTV. Topologically, residues 58–73 are cytoplasmic; that stretch reads LGTWIIIKINWRSAPA. A helical membrane pass occupies residues 74 to 93; the sequence is LSLAWTFLYLLFFRLVTWFG. The Lumenal portion of the chain corresponds to 94 to 193; it reads LPQPTPFANA…LPGKEPCLQR (100 aa). The helical transmembrane segment at 194–211 threads the bilayer; that stretch reads LKMVPVYGLLFIAVNSVF. Residues 212-230 lie on the Cytoplasmic side of the membrane; sequence PLSYVRTEDFLEHNYFYRF. A helical membrane pass occupies residues 231–260; sequence FYMVAIFFVFRMRFYSAWCGAEAGCISAGL. Residues 261–421 are Lumenal-facing; the sequence is GCYPQGALSK…LKASDTISYW (161 aa). An N-linked (GlcNAc...) asparagine glycan is attached at asparagine 316. Residues 422 to 442 form a helical membrane-spanning segment; the sequence is SSIYFVIHIIAIVCIAVGQFM. Over 443-467 the chain is Cytoplasmic; that stretch reads KGGRKREKRERGEGEKEDAVREKAE. Residues 447-467 form a disordered region; the sequence is KREKRERGEGEKEDAVREKAE. Positions 451-467 are enriched in basic and acidic residues; it reads RERGEGEKEDAVREKAE.

Belongs to the membrane-bound acyltransferase family.

It is found in the endoplasmic reticulum membrane. It catalyses the reaction a 1-acyl-sn-glycero-3-phospho-(1D-myo-inositol) + (5Z,8Z,11Z,14Z)-eicosatetraenoyl-CoA = a 1-acyl-2-(5Z,8Z,11Z,14Z-eicosatetraenoyl)-sn-glycero-3-phospho-(1D-myo-inositol) + CoA. The enzyme catalyses (5Z,8Z,11Z,14Z)-eicosatetraenoyl-CoA + 1-hexadecanoyl-sn-glycero-3-phosphocholine = 1-hexadecanoyl-2-(5Z,8Z,11Z,14Z-eicosatetraenoyl)-sn-glycero-3-phosphocholine + CoA. The catalysed reaction is a 1-acyl-sn-glycero-3-phospho-(1D-myo-inositol) + an acyl-CoA = a 1,2-diacyl-sn-glycero-3-phospho-(1D-myo-inositol) + CoA. It carries out the reaction 1-octadecanoyl-sn-glycero-3-phospho-(1D-myo-inositol) + (5Z,8Z,11Z,14Z)-eicosatetraenoyl-CoA = 1-octadecanoyl-2-(5Z,8Z,11Z,14Z-eicosatetraenoyl)-sn-glycero-3-phospho-(1D-myo-inositol) + CoA. It functions in the pathway lipid metabolism; phospholipid metabolism. Acyltransferase which catalyzes the transfer of an acyl group from an acyl-CoA to a lysophosphatidylinositol (1-acylglycerophosphatidylinositol or LPI) leading to the production of a phosphatidylinositol (1,2-diacyl-sn-glycero-3-phosphoinositol or PI) and participates in the reacylation step of the phospholipid remodeling pathway also known as the Lands cycle. Prefers arachidonoyl-CoA as the acyl donor, thus contributing to the regulation of free levels arachidonic acid in cell. The chain is Membrane-bound acylglycerophosphatidylinositol O-acyltransferase mboat7 (mboat7) from Danio rerio (Zebrafish).